Reading from the N-terminus, the 756-residue chain is U3 small nucleolar RNA-associated protein 14 homolog B (756 aa).

The disordered stretch occupies residues 21 to 44; sequence DLPENYPLSTSEDEGDSDGEGKRQ. Residues serine 29, serine 31, and serine 37 each carry the phosphoserine modification. 2 coiled-coil regions span residues 215–244 and 316–345; these read SLEE…RREK and PEAR…SEEE. Composition is skewed to basic and acidic residues over residues 419-428 and 452-468; these read KERSFQERVD and LNKE…SSEE. Disordered stretches follow at residues 419-468 and 497-539; these read KERS…SSEE and QQGE…KKKK. Positions 449–476 form a coiled coil; the sequence is LQKLNKESHQSDNQKVSSEENVLHIQRE. Phosphoserine is present on serine 554.

This sequence belongs to the UTP14 family. As to expression, expressed predominantly in germ cells of the testis; weakly expressed in brain.

The protein resides in the nucleus. It is found in the nucleolus. Its function is as follows. Essential for spermatogenesis. May be required specifically for ribosome biogenesis and hence protein synthesis during male meiosis. The polypeptide is U3 small nucleolar RNA-associated protein 14 homolog B (Utp14b) (Mus musculus (Mouse)).